Reading from the N-terminus, the 430-residue chain is Glucose-1-phosphate adenylyltransferase (430 aa).

Alpha-D-glucose 1-phosphate is bound by residues Gly-163, 178–179, and Ser-210; that span reads EK.

It belongs to the bacterial/plant glucose-1-phosphate adenylyltransferase family. As to quaternary structure, homotetramer.

It carries out the reaction alpha-D-glucose 1-phosphate + ATP + H(+) = ADP-alpha-D-glucose + diphosphate. Its pathway is glycan biosynthesis; glycogen biosynthesis. Functionally, involved in the biosynthesis of ADP-glucose, a building block required for the elongation reactions to produce glycogen. Catalyzes the reaction between ATP and alpha-D-glucose 1-phosphate (G1P) to produce pyrophosphate and ADP-Glc. This Synechococcus elongatus (strain ATCC 33912 / PCC 7942 / FACHB-805) (Anacystis nidulans R2) protein is Glucose-1-phosphate adenylyltransferase.